Reading from the N-terminus, the 167-residue chain is MASFIDPNQLDLEDQVVSINRVTKVVKGGRRLRFAAIAIVGDKNGHVGFATGKAQEVPEAIRKAVDAAKKSLIEVPIVGTTIPHEVIGHFGAGEVLLKPAEEGSGVAAGGAIRSVMELAGIADITSKSLGRNTPINMIRATMDGLTQLRTREQVAELRGVSASSLED.

In terms of domain architecture, S5 DRBM spans 12–75 (LEDQVVSINR…DAAKKSLIEV (64 aa)).

It belongs to the universal ribosomal protein uS5 family. Part of the 30S ribosomal subunit. Contacts proteins S4 and S8.

Its function is as follows. With S4 and S12 plays an important role in translational accuracy. In terms of biological role, located at the back of the 30S subunit body where it stabilizes the conformation of the head with respect to the body. This chain is Small ribosomal subunit protein uS5, found in Lacticaseibacillus paracasei (strain ATCC 334 / BCRC 17002 / CCUG 31169 / CIP 107868 / KCTC 3260 / NRRL B-441) (Lactobacillus paracasei).